Here is an 852-residue protein sequence, read N- to C-terminus: GPI ethanolamine phosphate transferase 2 (852 aa).

2 N-linked (GlcNAc...) asparagine glycosylation sites follow: asparagine 191 and asparagine 420. A run of 3 helical transmembrane segments spans residues 458–478 (LIRL…TFFP), 486–506 (FAPA…MMFA), and 516–536 (FWYW…AGHF). Asparagine 576 carries an N-linked (GlcNAc...) asparagine glycan. 6 helical membrane passes run 632–652 (LLYH…YSLY), 676–696 (TLTL…FLVF), 714–734 (TITS…SNAI), 750–770 (SVFI…IWWV), 787–807 (AHVT…MAAC), and 824–844 (YLYT…LGEI).

The protein belongs to the PIGG/PIGN/PIGO family. PIGG subfamily.

The protein resides in the endoplasmic reticulum membrane. Its pathway is glycolipid biosynthesis; glycosylphosphatidylinositol-anchor biosynthesis. Ethanolamine phosphate transferase involved in glycosylphosphatidylinositol-anchor biosynthesis. Transfers ethanolamine phosphate to the GPI second mannose. This is GPI ethanolamine phosphate transferase 2 (las21) from Aspergillus oryzae (strain ATCC 42149 / RIB 40) (Yellow koji mold).